The following is a 326-amino-acid chain: 5,10-methylenetetrahydromethanopterin reductase (326 aa).

This sequence belongs to the mer family.

The protein localises to the cytoplasm. The catalysed reaction is 5-methyl-5,6,7,8-tetrahydromethanopterin + oxidized coenzyme F420-(gamma-L-Glu)(n) + H(+) = 5,10-methylenetetrahydromethanopterin + reduced coenzyme F420-(gamma-L-Glu)(n). It participates in one-carbon metabolism; methanogenesis from CO(2); methyl-coenzyme M from 5,10-methylene-5,6,7,8-tetrahydromethanopterin: step 1/2. Functionally, catalyzes the reversible reduction of methylene-H(4)MPT to methyl-H(4)MPT. This Methanolobus tindarius protein is 5,10-methylenetetrahydromethanopterin reductase.